The primary structure comprises 189 residues: GTP cyclohydrolase 1 (189 aa).

Positions 78, 81, and 150 each coordinate Zn(2+).

It belongs to the GTP cyclohydrolase I family. In terms of assembly, toroid-shaped homodecamer, composed of two pentamers of five dimers.

The catalysed reaction is GTP + H2O = 7,8-dihydroneopterin 3'-triphosphate + formate + H(+). It functions in the pathway cofactor biosynthesis; 7,8-dihydroneopterin triphosphate biosynthesis; 7,8-dihydroneopterin triphosphate from GTP: step 1/1. In Listeria innocua serovar 6a (strain ATCC BAA-680 / CLIP 11262), this protein is GTP cyclohydrolase 1.